The sequence spans 218 residues: Thiopurine S-methyltransferase (218 aa).

W10, L45, E66, and R123 together coordinate S-adenosyl-L-methionine.

Belongs to the class I-like SAM-binding methyltransferase superfamily. TPMT family.

The protein localises to the cytoplasm. The catalysed reaction is S-adenosyl-L-methionine + a thiopurine = S-adenosyl-L-homocysteine + a thiopurine S-methylether.. This is Thiopurine S-methyltransferase from Shewanella amazonensis (strain ATCC BAA-1098 / SB2B).